Consider the following 232-residue polypeptide: MSNVDHAEIAKFEALAHRWWDRESEFKPLHDINPLRVNWIDERAGLAGKKVLDIGCGGGILSEAMAQRGASVTGIDMGEAPLAVARLHQLESGVAVDYRQITAEQMAEEMPGQFDVVTCLEMLEHVPDPASVIRACHRLVKPGGQVFLSTINRNPKAYLFAVIGAEYILQLLPRGTHDFRKFIRPSELGAWSREAGLEVKDIIGLTYNPLTKHYKLANDVDVNYMVQTQREA.

Arg36, Gly55, Asp76, and Leu120 together coordinate S-adenosyl-L-methionine.

The protein belongs to the methyltransferase superfamily. UbiG/COQ3 family.

The catalysed reaction is a 3-demethylubiquinol + S-adenosyl-L-methionine = a ubiquinol + S-adenosyl-L-homocysteine + H(+). The enzyme catalyses a 3-(all-trans-polyprenyl)benzene-1,2-diol + S-adenosyl-L-methionine = a 2-methoxy-6-(all-trans-polyprenyl)phenol + S-adenosyl-L-homocysteine + H(+). Its pathway is cofactor biosynthesis; ubiquinone biosynthesis. In terms of biological role, O-methyltransferase that catalyzes the 2 O-methylation steps in the ubiquinone biosynthetic pathway. The chain is Ubiquinone biosynthesis O-methyltransferase from Pseudomonas aeruginosa (strain LESB58).